Reading from the N-terminus, the 98-residue chain is Putative pterin-4-alpha-carbinolamine dehydratase (98 aa).

It belongs to the pterin-4-alpha-carbinolamine dehydratase family.

It catalyses the reaction (4aS,6R)-4a-hydroxy-L-erythro-5,6,7,8-tetrahydrobiopterin = (6R)-L-erythro-6,7-dihydrobiopterin + H2O. In Parasynechococcus marenigrum (strain WH8102), this protein is Putative pterin-4-alpha-carbinolamine dehydratase.